The sequence spans 1470 residues: ABC transporter G family member 48 (1470 aa).

Residues 1-47 (MAAAPSASGRRSMSWGSSISQSFRQAEADDPFGRAASQQGHDDDEEN) form a disordered region. Polar residues predominate over residues 9–24 (GRRSMSWGSSISQSFR). Positions 172 to 445 (GLIGRFGSSN…FENAGFRCPE (274 aa)) constitute an ABC transporter 1 domain. 205–212 (GPPSSGKS) contacts ATP. The region spanning 523-736 (ESLRAVMSRE…SQQAISINEF (214 aa)) is the ABC transmembrane type-2 1 domain. Transmembrane regions (helical) follow at residues 541–561 (FIYIFKVTQLIILAFMSMTVF), 577–597 (FLGALTFSLITILFNGFAELQ), 629–649 (VPVSLVEAAVWVVLTYYVMGF), 660–680 (FIAFFVTHQMAMAMFRFLGAI), 686–706 (VANTFGMFVLLIVFIFGGFLI), and 772–792 (FWISIGALIGFLVVFNILYIL). Residues 828 to 852 (QIVHNNGASNTSATSSIPMSGSRST) are disordered. The segment covering 832-843 (NNGASNTSATSS) has biased composition (low complexity). The region spanning 869–1121 (LCFNHVNYYV…KLVEYFEAVP (253 aa)) is the ABC transporter 2 domain. 914–921 (GVSGAGKT) lines the ATP pocket. Positions 1194-1408 (SQCIANFWKQ…TIYGVVASQF (215 aa)) constitute an ABC transmembrane type-2 2 domain. 7 consecutive transmembrane segments (helical) span residues 1215–1234 (AMRYLMTLLNGLVFGTVFWQ), 1249–1271 (LGATYAATFFLGAANCITVQPVV), 1301–1321 (VIYNILQGILYTIIIYAMIGY), 1331–1351 (FMFFIVASFNYFTLFGMMLVA), 1359–1379 (ANILISFVLPLWNLFAGFLVV), 1389–1409 (WYYWANPVSWTIYGVVASQFG), and 1439–1459 (FLGYVVLTHFGYIIVFFFIFG).

It belongs to the ABC transporter superfamily. ABCG family. PDR (TC 3.A.1.205) subfamily.

The protein localises to the membrane. In terms of biological role, may be a general defense protein. The sequence is that of ABC transporter G family member 48 from Oryza sativa subsp. japonica (Rice).